A 217-amino-acid chain; its full sequence is Adenylate kinase (217 aa).

An ATP-binding site is contributed by 10–15 (GAGKGT). An NMP region spans residues 30-59 (STGDIFRQNLRDNTDLGKLAKEYMDKGLLV). AMP contacts are provided by residues Thr31, Arg36, 57–59 (LLV), 85–88 (GYPR), and Gln92. The segment at 126–163 (GRRVCPNCGATYHIKTSPPAVDNVCDKCGAQLIQRSDD) is LID. Residue Arg127 participates in ATP binding. Zn(2+) contacts are provided by Cys130 and Cys133. An ATP-binding site is contributed by 136–137 (TY). Residues Cys150 and Cys153 each contribute to the Zn(2+) site. Residues Arg160 and Arg171 each coordinate AMP. Lys199 is a binding site for ATP.

It belongs to the adenylate kinase family. Monomer.

The protein localises to the cytoplasm. It catalyses the reaction AMP + ATP = 2 ADP. It participates in purine metabolism; AMP biosynthesis via salvage pathway; AMP from ADP: step 1/1. Functionally, catalyzes the reversible transfer of the terminal phosphate group between ATP and AMP. Plays an important role in cellular energy homeostasis and in adenine nucleotide metabolism. This is Adenylate kinase from Thermoanaerobacter pseudethanolicus (strain ATCC 33223 / 39E) (Clostridium thermohydrosulfuricum).